The chain runs to 1415 residues: DNA-directed RNA polymerase subunit beta' (1415 aa).

Zn(2+)-binding residues include cysteine 214, cysteine 294, cysteine 301, and cysteine 304. A compositionally biased stretch (polar residues) spans glutamine 1335 to isoleucine 1351. The segment at glutamine 1335–leucine 1390 is disordered.

This sequence belongs to the RNA polymerase beta' chain family. RpoC2 subfamily. In terms of assembly, in cyanobacteria the RNAP catalytic core is composed of 2 alpha, 1 beta, 1 beta', 1 gamma and 1 omega subunit. When a sigma factor is associated with the core the holoenzyme is formed, which can initiate transcription. Zn(2+) is required as a cofactor.

It catalyses the reaction RNA(n) + a ribonucleoside 5'-triphosphate = RNA(n+1) + diphosphate. In terms of biological role, DNA-dependent RNA polymerase catalyzes the transcription of DNA into RNA using the four ribonucleoside triphosphates as substrates. The sequence is that of DNA-directed RNA polymerase subunit beta' from Trichodesmium erythraeum (strain IMS101).